The following is a 162-amino-acid chain: MGLETEKADVQLFVDDDVYSRHSGVDYGDSEKFTDLGVDRDPRRLNSHLQLGFEDVIAEPVSTHSLDKVWICSHALFEISKYIIYKFLTVFLAIPLAFAAGILFATLSCLHIWITMPFVKTCLMVLPSVQTIWKSVTDVAIAPLCTSVGRSFSSVSLQLSHD.

Residues 1-86 are Cytoplasmic-facing; that stretch reads MGLETEKADV…FEISKYIIYK (86 aa). Residue Y19 is modified to Phosphotyrosine; by SRC. Phosphoserine occurs at positions 20 and 23. Phosphotyrosine; by SRC is present on Y27. Positions 87 to 107 form an intramembrane region, helical; it reads FLTVFLAIPLAFAAGILFATL. The Cytoplasmic segment spans residues 108-162; the sequence is SCLHIWITMPFVKTCLMVLPSVQTIWKSVTDVAIAPLCTSVGRSFSSVSLQLSHD.

The protein belongs to the caveolin family. Monomer or homodimer. Interacts with CAV1; the interaction forms a stable heterooligomeric complex that is required for targeting to lipid rafts and for caveolae formation. Tyrosine phosphorylated forms do not form heterooligomers with the Tyr-19-phosphorylated form existing as a monomer or dimer, and the Tyr-27-form as a monomer only. Interacts (tyrosine phosphorylated form) with the SH2 domain-containing proteins, RASA1, NCK1 and SRC. Interacts (tyrosine phosphorylated form) with INSR, the interaction (Tyr-27-phosphorylated form) is increased on insulin stimulation. Interacts (Tyr-19 phosphorylated form) with MAPK1 (phosphorylated form); the interaction, promoted by insulin, leads to nuclear location and MAPK1 activation. Interacts with STAT3; the interaction is increased on insulin-induced tyrosine phosphorylation leading to STAT activation. Post-translationally, phosphorylated on serine and tyrosine residues. CAV1 promotes phosphorylation on Ser-23 which then targets the complex to the plasma membrane, lipid rafts and caveolae. Phosphorylation on both Tyr-19 and Tyr-27 is required for insulin-induced 'Ser-727' phosphorylation of STAT3 and its activation. Phosphorylation on Tyr-19 is required for insulin-induced phosphorylation of MAPK1 and DNA binding of STAT3. Tyrosine phosphorylation is induced by both EGF and insulin.

It is found in the nucleus. Its subcellular location is the cytoplasm. It localises to the golgi apparatus membrane. The protein resides in the cell membrane. The protein localises to the membrane. It is found in the caveola. In terms of biological role, may act as a scaffolding protein within caveolar membranes. Interacts directly with G-protein alpha subunits and can functionally regulate their activity. Acts as an accessory protein in conjunction with CAV1 in targeting to lipid rafts and driving caveolae formation. Positive regulator of cellular mitogenesis of the MAPK signaling pathway. Required for the insulin-stimulated nuclear translocation and activation of MAPK1 and STAT3, and the subsequent regulation of cell cycle progression. The protein is Caveolin-2 (CAV2) of Dasypus novemcinctus (Nine-banded armadillo).